Consider the following 230-residue polypeptide: 3,4-dihydroxy-2-butanone 4-phosphate synthase (230 aa).

D-ribulose 5-phosphate-binding positions include 42-43 (RE), Asp-47, 155-159 (RRGHT), and Glu-179. Mg(2+) is bound at residue Glu-43. Residue His-158 participates in Mg(2+) binding.

Belongs to the DHBP synthase family. In terms of assembly, homodimer. The cofactor is Mg(2+). Mn(2+) serves as cofactor.

It catalyses the reaction D-ribulose 5-phosphate = (2S)-2-hydroxy-3-oxobutyl phosphate + formate + H(+). Its pathway is cofactor biosynthesis; riboflavin biosynthesis; 2-hydroxy-3-oxobutyl phosphate from D-ribulose 5-phosphate: step 1/1. Functionally, catalyzes the conversion of D-ribulose 5-phosphate to formate and 3,4-dihydroxy-2-butanone 4-phosphate. The chain is 3,4-dihydroxy-2-butanone 4-phosphate synthase from Bordetella pertussis (strain Tohama I / ATCC BAA-589 / NCTC 13251).